Here is a 784-residue protein sequence, read N- to C-terminus: Transcriptional activator somA (784 aa).

The region spanning 43–75 is the LisH domain; it reads MINNLNTYIYDYFLKRGYHECARALVKDESIKL. Over residues 75 to 84 the composition is skewed to polar residues; sequence LNTEPPTKTS. Disordered stretches follow at residues 75–122, 212–295, 424–726, and 764–784; these read LNTE…PNLA, GLSQ…SQAL, MMAR…DLSI, and GFDPNISYPTDGVETGAGDGL. The span at 103-117 shows a compositional bias: basic and acidic residues; sequence DSKDGDKIKIPDDLP. A compositionally biased stretch (low complexity) spans 215-233; that stretch reads QQQIAQLQKNQQMHMMQQM. Positions 234-244 are enriched in basic and acidic residues; sequence QREHSDMDMNG. Positions 247–259 are enriched in low complexity; sequence PQSPSSAENAPSP. The span at 453-467 shows a compositional bias: polar residues; sequence SPQGSRAGTSPNPNE. The span at 564–592 shows a compositional bias: low complexity; it reads QQQQGQPMGPQQSPAQQPQSTGTPQTQNS. A compositionally biased stretch (polar residues) spans 607-624; the sequence is RTSPQSQNAAPPTPQQAN. Residues 629-638 are compositionally biased toward basic and acidic residues; the sequence is KKREPKDTAR. Composition is skewed to low complexity over residues 644–661 and 691–701; these read KQPAAAAAAANTAATPSS and PTTSAPQQPTS. A compositionally biased stretch (pro residues) spans 702 to 715; that stretch reads APAPQPIVQQPPPD.

This sequence belongs to the FLO8 family. As to quaternary structure, interacts with ptaB.

The protein localises to the nucleus. Its function is as follows. Transcription factor that controls the expression of genes related to the process of conidiation and adherence and regulates biofilm formation. Controls conidiation and adhesion primarily by affecting the expression of the three regulatory genes flbB, stuA and medA. Required for virulence in an egg and a mouse infection model. The protein is Transcriptional activator somA of Aspergillus fumigatus (strain ATCC MYA-4609 / CBS 101355 / FGSC A1100 / Af293) (Neosartorya fumigata).